Reading from the N-terminus, the 497-residue chain is Angiopoietin-1 (497 aa).

The N-terminal stretch at 1–19 (MTVFLSFAFFAAILTHIGC) is a signal peptide. Residues 81–119 (QKLQHLEHVMENYTQWLQKLENYIVENMKSEMAQIQQNA) adopt a coiled-coil conformation. N-linked (GlcNAc...) asparagine glycosylation is found at Asn92, Asn122, Asn154, Asn243, and Asn294. The stretch at 153 to 261 (LNQTSRLEIQ…LELMDTVHNL (109 aa)) forms a coiled coil. The Fibrinogen C-terminal domain occupies 276 to 496 (REEEKPFRDC…STTMMIRPLD (221 aa)). 2 disulfide bridges follow: Cys285–Cys314 and Cys438–Cys451.

As to quaternary structure, homooligomer. Interacts with TEK/TIE2. Interacts with SVEP1/polydom. Interacts with THBD; this interaction significantly inhibits the generation of activated PC and TAFIa/CPB2 by the thrombin/thrombomodulin complex.

The protein localises to the secreted. Its function is as follows. Binds and activates TIE2 receptor by inducing its tyrosine phosphorylation. Implicated in endothelial developmental processes later and distinct from that of VEGF. Appears to play a crucial role in mediating reciprocal interactions between the endothelium and surrounding matrix and mesenchyme. Mediates blood vessel maturation/stability. It may play an important role in the heart early development. This is Angiopoietin-1 (Angpt1) from Rattus norvegicus (Rat).